The primary structure comprises 297 residues: MAVSATDLKESRILLYYCFTPIADPTAIMLWQKQLCESLGLTGRILISEHGINGTVGGSLHACKQYARRTREYPGFKGMEFKWSQGGAEDFPRLSVKVRDEIVSFGAPGELKVDENGVIGGGTHLKPEEVNKLVEERGDDVVFFDGRNAMEAEIGRFKNAVVPDVETTHDFIKELESGKYDWMKDKPVVSYCTGGIRCEVLSALMKNRGFEEVYQIDGGIVRYGEKYGDKGLWEGSLYVFDKRMHMEFSEEAKQLGFCKNCGAATNTFHNCENSECREQILLCEDCAADPAVTCGEC.

Residues Arg137–Leu232 enclose the Rhodanese domain. Cys192 acts as the Cysteine persulfide intermediate in catalysis.

Belongs to the TrhO family.

It catalyses the reaction uridine(34) in tRNA + AH2 + O2 = 5-hydroxyuridine(34) in tRNA + A + H2O. In terms of biological role, catalyzes oxygen-dependent 5-hydroxyuridine (ho5U) modification at position 34 in tRNAs. This is tRNA uridine(34) hydroxylase from Corynebacterium urealyticum (strain ATCC 43042 / DSM 7109).